Here is a 262-residue protein sequence, read N- to C-terminus: 1-(5-phosphoribosyl)-5-[(5-phosphoribosylamino)methylideneamino] imidazole-4-carboxamide isomerase (262 aa).

Aspartate 8 functions as the Proton acceptor in the catalytic mechanism. Residue aspartate 130 is the Proton donor of the active site.

Belongs to the HisA/HisF family.

Its subcellular location is the cytoplasm. The catalysed reaction is 1-(5-phospho-beta-D-ribosyl)-5-[(5-phospho-beta-D-ribosylamino)methylideneamino]imidazole-4-carboxamide = 5-[(5-phospho-1-deoxy-D-ribulos-1-ylimino)methylamino]-1-(5-phospho-beta-D-ribosyl)imidazole-4-carboxamide. Its pathway is amino-acid biosynthesis; L-histidine biosynthesis; L-histidine from 5-phospho-alpha-D-ribose 1-diphosphate: step 4/9. This chain is 1-(5-phosphoribosyl)-5-[(5-phosphoribosylamino)methylideneamino] imidazole-4-carboxamide isomerase, found in Chloroherpeton thalassium (strain ATCC 35110 / GB-78).